The following is a 178-amino-acid chain: ATP synthase subunit delta (178 aa).

This sequence belongs to the ATPase delta chain family. As to quaternary structure, F-type ATPases have 2 components, F(1) - the catalytic core - and F(0) - the membrane proton channel. F(1) has five subunits: alpha(3), beta(3), gamma(1), delta(1), epsilon(1). F(0) has three main subunits: a(1), b(2) and c(10-14). The alpha and beta chains form an alternating ring which encloses part of the gamma chain. F(1) is attached to F(0) by a central stalk formed by the gamma and epsilon chains, while a peripheral stalk is formed by the delta and b chains.

The protein resides in the cell inner membrane. In terms of biological role, f(1)F(0) ATP synthase produces ATP from ADP in the presence of a proton or sodium gradient. F-type ATPases consist of two structural domains, F(1) containing the extramembraneous catalytic core and F(0) containing the membrane proton channel, linked together by a central stalk and a peripheral stalk. During catalysis, ATP synthesis in the catalytic domain of F(1) is coupled via a rotary mechanism of the central stalk subunits to proton translocation. Its function is as follows. This protein is part of the stalk that links CF(0) to CF(1). It either transmits conformational changes from CF(0) to CF(1) or is implicated in proton conduction. This chain is ATP synthase subunit delta, found in Hydrogenovibrio crunogenus (strain DSM 25203 / XCL-2) (Thiomicrospira crunogena).